The primary structure comprises 223 residues: N-terminal Xaa-Pro-Lys N-methyltransferase 1 (223 aa).

M1 carries the post-translational modification N-acetylmethionine. T2 is modified (N-acetylthreonine; in N-terminal Xaa-Pro-Lys N-methyltransferase 1, N-terminally processed). S-adenosyl-L-methionine is bound by residues G69, R74, 91-93 (DVT), 119-120 (LQ), and Q135.

Belongs to the methyltransferase superfamily. NTM1 family.

The protein localises to the nucleus. The enzyme catalyses N-terminal L-alanyl-L-prolyl-L-lysyl-[protein] + 3 S-adenosyl-L-methionine = N-terminal N,N,N-trimethyl-L-alanyl-L-prolyl-L-lysyl-[protein] + 3 S-adenosyl-L-homocysteine + 3 H(+). It carries out the reaction N-terminal L-seryl-L-prolyl-L-lysyl-[protein] + 3 S-adenosyl-L-methionine = N-terminal N,N,N-trimethyl-L-seryl-L-prolyl-L-lysyl-[protein] + 3 S-adenosyl-L-homocysteine + 3 H(+). The catalysed reaction is N-terminal L-prolyl-L-prolyl-L-lysyl-[protein] + 2 S-adenosyl-L-methionine = N-terminal N,N-dimethyl-L-prolyl-L-prolyl-L-lysyl-[protein] + 2 S-adenosyl-L-homocysteine + 2 H(+). Distributive alpha-N-methyltransferase that methylates the N-terminus of target proteins containing the N-terminal motif [Ala/Gly/Pro/Ser]-Pro-Lys when the initiator Met is cleaved. Specifically catalyzes mono-, di- or tri-methylation of the exposed alpha-amino group of the Ala, Gly or Ser residue in the [Ala/Gly/Ser]-Pro-Lys motif and mono- or di-methylation of Pro in the Pro-Pro-Lys motif. Some of the substrates may be primed by NTMT2-mediated monomethylation. Catalyzes the trimethylation of the N-terminal Gly in CENPA (after removal of Met-1). Responsible for the N-terminal methylation of KLHL31, MYL2, MYL3, RB1, RCC1, RPL23A and SET. Required during mitosis for normal bipolar spindle formation and chromosome segregation via its action on RCC1. This chain is N-terminal Xaa-Pro-Lys N-methyltransferase 1 (NTMT1), found in Bos taurus (Bovine).